The primary structure comprises 377 residues: Nitric oxide reductase FlRd-NAD(+) reductase (377 aa).

It belongs to the FAD-dependent oxidoreductase family. Requires FAD as cofactor.

The protein localises to the cytoplasm. The catalysed reaction is 2 reduced [nitric oxide reductase rubredoxin domain] + NAD(+) + H(+) = 2 oxidized [nitric oxide reductase rubredoxin domain] + NADH. It functions in the pathway nitrogen metabolism; nitric oxide reduction. Functionally, one of at least two accessory proteins for anaerobic nitric oxide (NO) reductase. Reduces the rubredoxin moiety of NO reductase. This chain is Nitric oxide reductase FlRd-NAD(+) reductase, found in Salmonella paratyphi C (strain RKS4594).